A 149-amino-acid chain; its full sequence is uncharacterized protein (149 aa).

Residues M1–G15 show a composition bias toward basic and acidic residues. The segment at M1 to K32 is disordered.

This is an uncharacterized protein from Gallus gallus (Chicken).